The primary structure comprises 1302 residues: Neuroglian (1302 aa).

The signal sequence occupies residues 1 to 23 (MWRQSTILAALLVALLCAGSAES). Topologically, residues 24 to 1138 (KGNRPPRITK…ANAGWFIGMM (1115 aa)) are extracellular. 6 consecutive Ig-like C2-type domains span residues 29-133 (PRIT…AELN), 134-225 (AFKD…YKIG), 245-330 (PPVR…QSFS), 339-426 (PYFT…VYLN), 432-524 (PTIS…TRIT), and 521-610 (TRIT…ANLI). 4 disulfides stabilise this stretch: cysteine 59–cysteine 111, cysteine 155–cysteine 212, cysteine 268–cysteine 317, and cysteine 360–cysteine 410. Residues asparagine 182 and asparagine 198 are each glycosylated (N-linked (GlcNAc...) asparagine). N-linked (GlcNAc...) asparagine glycans are attached at residues asparagine 411 and asparagine 448. Fibronectin type-III domains lie at 614-711 (VPNA…TQPD), 716-813 (NPDN…SGED), 818-915 (APTN…TPEG), 916-1017 (VPSP…LKDA), and 1021-1119 (APAT…TVEG). Residues cysteine 625 and cysteine 706 are joined by a disulfide bond. Residues asparagine 652 and asparagine 683 are each glycosylated (N-linked (GlcNAc...) asparagine). N-linked (GlcNAc...) asparagine glycosylation is present at asparagine 821. A glycan (N-linked (GlcNAc...) asparagine) is linked at asparagine 1125. Residues 1139 to 1154 (LALAFIIILFIIICII) form a helical membrane-spanning segment. Over 1155 to 1302 (RRNRGGKYDV…AAAGAVATYV (148 aa)) the chain is Cytoplasmic. A compositionally biased stretch (basic and acidic residues) spans 1172–1182 (GRRDYPEEGGF). Disordered regions lie at residues 1172–1223 (GRRD…GDTG) and 1236–1291 (VPGK…ASNG). The segment covering 1188 to 1203 (PLDNKSAGRQSVSSAN) has biased composition (polar residues). Residues 1253–1275 (AAAHQAAPTAGGSGAAGSAAAAG) show a composition bias toward low complexity.

In terms of assembly, forms a complex with Nrx-IV/Nrx and Cont. Forms a complex composed of septate junction proteins Nrx-IV/Nrx, Tsf2/MTf, Cont and Nrg during late embryogenesis. Restricted to the surface of neurons and glia in the developing nervous system. In terms of tissue distribution, restricted to non-neuronal tissues.

It is found in the cell membrane. Its subcellular location is the cell junction. It localises to the septate junction. Essential for septate junctions. Septate junctions, which are the equivalent of vertebrate tight junctions, are characterized by regular arrays of transverse structures that span the intermembrane space and form a physical barrier to diffusion. Required for formation of the hemolymph-brain barrier (the insect blood-brain barrier). Vital for embryonic development. Involved in the targeting for degradation or recycling of certain septate junction components, including kune and bou/boudin, by regulating their endocytosis. Its function is as follows. May play a role in neural and glial cell adhesion in the developing embryo. In terms of biological role, may be a more general cell adhesion molecule involved in non-neuronal tissues and imaginal disk morphogenesis. In Drosophila melanogaster (Fruit fly), this protein is Neuroglian (Nrg).